A 482-amino-acid polypeptide reads, in one-letter code: MDELVHDLASALEQTSEQSKLGELWEEMALSPRQQRRQLRKRRGRKRRSDFTHLAEHACCFSEASESSLDEATKDCREVAPLTNFSDSDDTVVAKRHPALSAIIRGKQHSWPESDSFTENAPCRPLRRRRKVKRVTSEVAASLQQKLKVSDWSYERGCRFKSAKKQRLSRWKENTPWTSSGHGLCESAENRTFLSQPGRKERMECEAEEQKHGSDENMSECDTSSVCSSSDTGLFTNDEGRQGDDEQSDWFYEGECVPGFTVHNLLPKWAPDHCTEVERMDSGLDKLSDPTFLLPSRPAQRGYHGRLNRLPGAAARCLRKGRRRLPGKEASMSSLGTERIGHTISDPRQTDFWLPSAGKRERNQFNPLSPLYSLDVLADASHRRCSPAHCSARQASVHWGPPCPRDIKRKRKPVASASFSSPSPVHPDVLEPAIPAQKPPDSEWLDGTSAAEKATAFPPATFFKMPQEKNSGCSSSPGTNGC.

Phosphoserine occurs at positions 31, 86, and 88. T91 carries the post-translational modification Phosphothreonine. 2 disordered regions span residues 195–222 and 408–482; these read SQPG…SECD and KRKR…TNGC. The segment covering 198–215 has biased composition (basic and acidic residues); it reads GRKERMECEAEEQKHGSD. Low complexity predominate over residues 414–427; sequence VASASFSSPSPVHP. A compositionally biased stretch (polar residues) spans 468-482; sequence EKNSGCSSSPGTNGC.

The polypeptide is G patch domain-containing protein 2-like (Gpatch2l) (Mus musculus (Mouse)).